The primary structure comprises 1231 residues: uncharacterized protein (1231 aa).

Disordered stretches follow at residues 171–197 (LKPD…QHDD), 210–259 (DESF…HLPT), and 389–547 (ASPR…RSSR). A compositionally biased stretch (basic residues) spans 440–450 (RSRHSHKRRSI). Phosphoserine is present on residues Ser449, Ser451, Ser453, and Ser455. Basic residues predominate over residues 458–502 (RGGRRAVRRSRSRSPRRSYNRGSTRSRSRSMRHRSRSPAHYRGRG). Positions 503–541 (RGREPASKERGSSSRDFGGRHSLQRERERSSEYYHRNEG) are enriched in basic and acidic residues. The residue at position 549 (Tyr549) is a Phosphotyrosine. 3 disordered regions span residues 570–591 (KTSS…ASEP), 950–981 (PNLD…DDEE), and 1058–1203 (TLSK…PPFN). Phosphoserine occurs at positions 573 and 589. Thr970 bears the Phosphothreonine mark. Ser972 carries the phosphoserine modification. Residues 1076-1103 (YMMNQQHGAPNAQNAPNLGQNPGQNLGQ) show a composition bias toward polar residues. Over residues 1118 to 1127 (QQQQQQQQQQ) the composition is skewed to low complexity. A compositionally biased stretch (pro residues) spans 1178–1203 (PPGPGGYVGPPPNPWASNVPPQPPFN).

This is an uncharacterized protein from Drosophila melanogaster (Fruit fly).